Consider the following 550-residue polypeptide: Mycosin-2 (550 aa).

The signal sequence occupies residues 1-33 (MASPLNRPGLRAAAASAALTLVALSANVPAAQA). The tract at residues 34–62 (IPPPSVDPAMVPADARPGPDQPMRRSNSC) is disordered. Residues 79-490 (GFNLVNISKA…YGLVDPVAAL (412 aa)) enclose the Peptidase S8 domain. Catalysis depends on charge relay system residues Asp103 and His133. Pro residues predominate over residues 168–190 (PPVTAAPAPPVEVPPPMPPPPPV). Residues 168–236 (PPVTAAPAPP…PPPPPGAPDG (69 aa)) form a disordered region. The active-site Charge relay system is the Ser435. Residues 524 to 544 (NIAIGFVGAVATGVLAMAIGA) traverse the membrane as a helical segment.

Belongs to the peptidase S8 family.

The protein resides in the cell membrane. The protein is Mycosin-2 of Mycobacterium tuberculosis (strain ATCC 25618 / H37Rv).